The chain runs to 568 residues: Probable asparagine--tRNA ligase, cytoplasmic (568 aa).

This sequence belongs to the class-II aminoacyl-tRNA synthetase family.

Its subcellular location is the cytoplasm. It carries out the reaction tRNA(Asn) + L-asparagine + ATP = L-asparaginyl-tRNA(Asn) + AMP + diphosphate + H(+). Cytosolic asparaginyl-tRNA synthetase which catalyzes the specific attachment of asparagine to its cognate tRNA. The protein is Probable asparagine--tRNA ligase, cytoplasmic (nrs1) of Schizosaccharomyces pombe (strain 972 / ATCC 24843) (Fission yeast).